Reading from the N-terminus, the 463-residue chain is Elongation factor 1-alpha 1 (463 aa).

Positions 5–242 (KIHINIVVIG…DAILPPARPT (238 aa)) constitute a tr-type G domain. Positions 14 to 21 (GHVDSGKS) are G1. 14–21 (GHVDSGKS) is a GTP binding site. The tract at residues 70 to 74 (GITID) is G2. The interval 91–94 (DAPG) is G3. GTP is bound by residues 91–95 (DAPGH) and 153–156 (NKMD). Residues 153-156 (NKMD) form a G4 region. A G5 region spans residues 194 to 196 (SGW). 5-glutamyl glycerylphosphorylethanolamine occurs at positions 301 and 374.

The protein belongs to the TRAFAC class translation factor GTPase superfamily. Classic translation factor GTPase family. EF-Tu/EF-1A subfamily.

It localises to the cytoplasm. This protein promotes the GTP-dependent binding of aminoacyl-tRNA to the A-site of ribosomes during protein biosynthesis. The protein is Elongation factor 1-alpha 1 of Drosophila melanogaster (Fruit fly).